The following is a 129-amino-acid chain: Small ribosomal subunit protein uS11 (129 aa).

This sequence belongs to the universal ribosomal protein uS11 family. In terms of assembly, part of the 30S ribosomal subunit. Interacts with proteins S7 and S18. Binds to IF-3.

Its function is as follows. Located on the platform of the 30S subunit, it bridges several disparate RNA helices of the 16S rRNA. Forms part of the Shine-Dalgarno cleft in the 70S ribosome. This is Small ribosomal subunit protein uS11 from Haemophilus ducreyi (strain 35000HP / ATCC 700724).